Consider the following 546-residue polypeptide: T-complex protein 1 subunit zeta (546 aa).

Ser2 is modified (N-acetylserine). Ser249 is modified (phosphoserine).

This sequence belongs to the TCP-1 chaperonin family. As to quaternary structure, heterooligomeric complex of about 850 to 900 kDa that forms two stacked rings, 12 to 16 nm in diameter.

Its subcellular location is the cytoplasm. In terms of biological role, molecular chaperone; assists the folding of proteins upon ATP hydrolysis. Known to play a role, in vitro, in the folding of actin and tubulin. In yeast may play a role in mitotic spindle formation. In Saccharomyces cerevisiae (strain ATCC 204508 / S288c) (Baker's yeast), this protein is T-complex protein 1 subunit zeta (CCT6).